Consider the following 555-residue polypeptide: Dihydroxy-acid dehydratase (555 aa).

C46 contacts [2Fe-2S] cluster. D78 contacts Mg(2+). C119 provides a ligand contact to [2Fe-2S] cluster. Mg(2+) is bound by residues D120 and K121. Position 121 is an N6-carboxylysine (K121). [2Fe-2S] cluster is bound at residue C191. A Mg(2+)-binding site is contributed by E442. Residue S468 is the Proton acceptor of the active site.

Belongs to the IlvD/Edd family. Homodimer. [2Fe-2S] cluster is required as a cofactor. The cofactor is Mg(2+).

The catalysed reaction is (2R)-2,3-dihydroxy-3-methylbutanoate = 3-methyl-2-oxobutanoate + H2O. It carries out the reaction (2R,3R)-2,3-dihydroxy-3-methylpentanoate = (S)-3-methyl-2-oxopentanoate + H2O. Its pathway is amino-acid biosynthesis; L-isoleucine biosynthesis; L-isoleucine from 2-oxobutanoate: step 3/4. It functions in the pathway amino-acid biosynthesis; L-valine biosynthesis; L-valine from pyruvate: step 3/4. Functionally, functions in the biosynthesis of branched-chain amino acids. Catalyzes the dehydration of (2R,3R)-2,3-dihydroxy-3-methylpentanoate (2,3-dihydroxy-3-methylvalerate) into 2-oxo-3-methylpentanoate (2-oxo-3-methylvalerate) and of (2R)-2,3-dihydroxy-3-methylbutanoate (2,3-dihydroxyisovalerate) into 2-oxo-3-methylbutanoate (2-oxoisovalerate), the penultimate precursor to L-isoleucine and L-valine, respectively. The protein is Dihydroxy-acid dehydratase of Thermus thermophilus (strain ATCC BAA-163 / DSM 7039 / HB27).